The primary structure comprises 287 residues: Glycine--tRNA ligase alpha subunit (287 aa).

It belongs to the class-II aminoacyl-tRNA synthetase family. Tetramer of two alpha and two beta subunits.

It is found in the cytoplasm. The catalysed reaction is tRNA(Gly) + glycine + ATP = glycyl-tRNA(Gly) + AMP + diphosphate. This is Glycine--tRNA ligase alpha subunit from Petrotoga mobilis (strain DSM 10674 / SJ95).